The chain runs to 638 residues: Neuroendocrine convertase 2 (638 aa).

Positions 1 to 25 (MKGGCVSQWKAAAGFLFCVMVFASA) are cleaved as a signal peptide. Residues 26 to 109 (ERPVFTNHFL…QQEGFDRKKR (84 aa)) constitute a propeptide that is removed on maturation. The region spanning 129–453 (QWYLINTGQA…YGVLDAGAMV (325 aa)) is the Peptidase S8 domain. Residues D167 and H208 each act as charge relay system in the active site. 2 cysteine pairs are disulfide-bonded: C225–C376 and C317–C347. N375 carries an N-linked (GlcNAc...) asparagine glycan. The Charge relay system role is filled by S384. Residues 461–597 (TVPERFHCVG…TLMLHGTQSA (137 aa)) enclose the P/Homo B domain. An intrachain disulfide couples C468 to C494. 2 N-linked (GlcNAc...) asparagine glycosylation sites follow: N514 and N524.

Belongs to the peptidase S8 family. Furin subfamily.

It is found in the cytoplasmic vesicle. The protein localises to the secretory vesicle. The protein resides in the secreted. The enzyme catalyses Release of protein hormones and neuropeptides from their precursors, generally by hydrolysis of -Lys-Arg-|- bonds.. Its function is as follows. Serine endopeptidase which is involved in the processing of hormone and other protein precursors at sites comprised of pairs of basic amino acid residues. Responsible for the release of glucagon from proglucagon in pancreatic A cells. The chain is Neuroendocrine convertase 2 (PCSK2) from Homo sapiens (Human).